The primary structure comprises 308 residues: Glutaminase (308 aa).

Residues S66, N117, E161, N168, Y192, Y244, and V262 each contribute to the substrate site.

This sequence belongs to the glutaminase family. As to quaternary structure, homotetramer.

It catalyses the reaction L-glutamine + H2O = L-glutamate + NH4(+). The sequence is that of Glutaminase from Salmonella dublin (strain CT_02021853).